The following is a 189-amino-acid chain: Stathmin-4 (189 aa).

S-palmitoyl cysteine attachment occurs at residues Cys-20 and Cys-22. One can recognise an SLD domain in the interval 48 to 189 (SDMEVIELNK…NKELKEEASR (142 aa)). A Phosphoserine modification is found at Ser-90. Positions 90 to 188 (SLEEIQKKLE…KNKELKEEAS (99 aa)) form a coiled coil. Positions 168 to 189 (QEKDKHAEEVRKNKELKEEASR) are disordered.

The protein belongs to the stathmin family.

It localises to the golgi apparatus. The protein resides in the cell projection. Its subcellular location is the growth cone. It is found in the axon. In terms of biological role, exhibits microtubule-destabilizing activity. In Homo sapiens (Human), this protein is Stathmin-4 (STMN4).